The sequence spans 177 residues: MEKNMSYWHQVPPGPNPPDEVYVVVEIPKGERNKYEIAKEFPGIKLDRIIYSSYVYPLEYGLIPQTYYSDGDPIDAMVFMSQSTYPGVILRAKPVGMMNMVDSGDVDNKIICVCLDDPVYSKINNYREIPEHVLKETENFFETYKKLQNKEVKVTGWEGPDKAKQEIKKAIEDYKKL.

Substrate contacts are provided by lysine 34, arginine 48, and tyrosine 60. Positions 70, 75, and 107 each coordinate Mg(2+). Tyrosine 144 lines the substrate pocket.

The protein belongs to the PPase family. Homohexamer. Mg(2+) is required as a cofactor.

It is found in the cytoplasm. It carries out the reaction diphosphate + H2O = 2 phosphate + H(+). Functionally, catalyzes the hydrolysis of inorganic pyrophosphate (PPi) forming two phosphate ions. The protein is Inorganic pyrophosphatase of Picrophilus torridus (strain ATCC 700027 / DSM 9790 / JCM 10055 / NBRC 100828 / KAW 2/3).